The following is a 203-amino-acid chain: Outer-membrane lipoprotein carrier protein (203 aa).

The signal sequence occupies residues 1 to 21; it reads MKKMAIACALLSSVVASSVWA. The interval 178–203 is disordered; it reads QQNGAVDPSKFTFTPPQGVTIDDQRK.

The protein belongs to the LolA family. In terms of assembly, monomer.

It is found in the periplasm. Functionally, participates in the translocation of lipoproteins from the inner membrane to the outer membrane. Only forms a complex with a lipoprotein if the residue after the N-terminal Cys is not an aspartate (The Asp acts as a targeting signal to indicate that the lipoprotein should stay in the inner membrane). This chain is Outer-membrane lipoprotein carrier protein, found in Salmonella agona (strain SL483).